A 108-amino-acid chain; its full sequence is Nucleoid-associated protein BPP1222 (108 aa).

Residues T86 to F108 are disordered. Pro residues predominate over residues P99–F108.

This sequence belongs to the YbaB/EbfC family. In terms of assembly, homodimer.

It is found in the cytoplasm. It localises to the nucleoid. Functionally, binds to DNA and alters its conformation. May be involved in regulation of gene expression, nucleoid organization and DNA protection. This chain is Nucleoid-associated protein BPP1222, found in Bordetella parapertussis (strain 12822 / ATCC BAA-587 / NCTC 13253).